A 567-amino-acid chain; its full sequence is DNA ligase (567 aa).

E260 contributes to the ATP binding site. The N6-AMP-lysine intermediate role is filled by K262. Residues R267, R282, E312, F352, R427, and K433 each coordinate ATP.

It belongs to the ATP-dependent DNA ligase family. It depends on Mg(2+) as a cofactor.

It carries out the reaction ATP + (deoxyribonucleotide)n-3'-hydroxyl + 5'-phospho-(deoxyribonucleotide)m = (deoxyribonucleotide)n+m + AMP + diphosphate.. DNA ligase that seals nicks in double-stranded DNA during DNA replication, DNA recombination and DNA repair. This chain is DNA ligase, found in Methanococcoides burtonii (strain DSM 6242 / NBRC 107633 / OCM 468 / ACE-M).